Here is a 282-residue protein sequence, read N- to C-terminus: Putative 4-diphosphocytidyl-2-C-methyl-D-erythritol kinase (282 aa).

The active site involves K9. 93-103 contacts ATP; sequence PVSAGLAGGSA. Residue D135 is part of the active site.

Belongs to the GHMP kinase family. IspE subfamily.

It carries out the reaction 4-CDP-2-C-methyl-D-erythritol + ATP = 4-CDP-2-C-methyl-D-erythritol 2-phosphate + ADP + H(+). Functionally, catalyzes the phosphorylation of the position 2 hydroxy group of 4-diphosphocytidyl-2C-methyl-D-erythritol. This Staphylococcus haemolyticus (strain JCSC1435) protein is Putative 4-diphosphocytidyl-2-C-methyl-D-erythritol kinase.